The chain runs to 332 residues: Glycerol-3-phosphate dehydrogenase [NAD(P)+] (332 aa).

5 residues coordinate NADPH: S11, W12, R32, R33, and K106. Residues K106 and G136 each contribute to the sn-glycerol 3-phosphate site. A140 contributes to the NADPH binding site. K191, D244, S254, R255, and N256 together coordinate sn-glycerol 3-phosphate. K191 acts as the Proton acceptor in catalysis. R255 lines the NADPH pocket. V280 and E282 together coordinate NADPH.

This sequence belongs to the NAD-dependent glycerol-3-phosphate dehydrogenase family.

The protein resides in the cytoplasm. The enzyme catalyses sn-glycerol 3-phosphate + NAD(+) = dihydroxyacetone phosphate + NADH + H(+). It catalyses the reaction sn-glycerol 3-phosphate + NADP(+) = dihydroxyacetone phosphate + NADPH + H(+). It functions in the pathway membrane lipid metabolism; glycerophospholipid metabolism. Its function is as follows. Catalyzes the reduction of the glycolytic intermediate dihydroxyacetone phosphate (DHAP) to sn-glycerol 3-phosphate (G3P), the key precursor for phospholipid synthesis. The protein is Glycerol-3-phosphate dehydrogenase [NAD(P)+] of Corynebacterium urealyticum (strain ATCC 43042 / DSM 7109).